Consider the following 437-residue polypeptide: Trigger factor (437 aa).

Residues 163 to 248 (GDRVIIDFEG…LNNVSEPTLP (86 aa)) form the PPIase FKBP-type domain.

It belongs to the FKBP-type PPIase family. Tig subfamily.

The protein localises to the cytoplasm. It catalyses the reaction [protein]-peptidylproline (omega=180) = [protein]-peptidylproline (omega=0). Functionally, involved in protein export. Acts as a chaperone by maintaining the newly synthesized protein in an open conformation. Functions as a peptidyl-prolyl cis-trans isomerase. In Neisseria gonorrhoeae (strain NCCP11945), this protein is Trigger factor.